The following is a 298-amino-acid chain: GTP cyclohydrolase FolE2 (298 aa).

This sequence belongs to the GTP cyclohydrolase IV family.

The enzyme catalyses GTP + H2O = 7,8-dihydroneopterin 3'-triphosphate + formate + H(+). Its pathway is cofactor biosynthesis; 7,8-dihydroneopterin triphosphate biosynthesis; 7,8-dihydroneopterin triphosphate from GTP: step 1/1. Functionally, converts GTP to 7,8-dihydroneopterin triphosphate. This chain is GTP cyclohydrolase FolE2, found in Neisseria meningitidis serogroup B (strain ATCC BAA-335 / MC58).